The primary structure comprises 234 residues: Multicopy suppressor of SEC21 protein 27 (234 aa).

Residues 1–47 are Cytoplasmic-facing; sequence MQTPLESTDVKLDTLNEPSAHLIEKNVALPKDIFRSYLSYWIYEIAR. Phosphothreonine is present on Thr3. The chain crosses the membrane as a helical span at residues 48 to 68; it reads YTPVMILSLVIGVLVLLIIFF. Over 69-72 the chain is Extracellular; the sequence is NDNE. The chain crosses the membrane as a helical span at residues 73–93; that stretch reads ACVFNSAYYAYLSLVVLLIIL. Over 94–234 the chain is Cytoplasmic; the sequence is GDGNPKLVSR…NIDALLKKTE (141 aa). The interval 231–234 is COPI binding; sequence KKTE.

Belongs to the DUP/COS family. As to quaternary structure, interacts with MST28. Binds to coatomer proteins of COPI and SEC23/SEC24 of COPII coated vesicles.

It localises to the endoplasmic reticulum. The protein resides in the golgi apparatus. It is found in the cytoplasmic vesicle. Its subcellular location is the COPI-coated vesicle membrane. The protein localises to the COPII-coated vesicle membrane. Its function is as follows. Involved in protein trafficking vesicle formation, probably by stabilizing of coatomer at the Golgi membrane and thus allowing the efficient formation of COPI coated vesicles. This Saccharomyces cerevisiae (strain ATCC 204508 / S288c) (Baker's yeast) protein is Multicopy suppressor of SEC21 protein 27 (MST27).